Here is a 549-residue protein sequence, read N- to C-terminus: Leucine-rich repeat, immunoglobulin-like domain and transmembrane domain-containing protein 2 (549 aa).

Positions 1–22 are cleaved as a signal peptide; that stretch reads MAFVFYCFLQVLVSWVIHAVQP. In terms of domain architecture, LRRNT spans 23-54; that stretch reads FCLPECTCSEESFGRSLQCMSMSLGKIPDNFP. 4 LRR repeats span residues 80 to 103, 104 to 125, 128 to 149, and 152 to 173; these read SLEY…EDLP, ELRE…AFRA, LLRV…ALQF, and NLIY…VFLN. The N-linked (GlcNAc...) asparagine glycan is linked to Asn90. Residues 200 to 252 form the LRRCT domain; that stretch reads NPWLCDCRLRGLAQFVKSVGPPFILVNSYLVCQGPVSKAGQLLHETELGVCMK. The 87-residue stretch at 253-339 folds into the Ig-like domain; the sequence is PTISTPSVNV…FNSIGRSSLV (87 aa). Asn261 is a glycosylation site (N-linked (GlcNAc...) asparagine). An intrachain disulfide couples Cys274 to Cys327. The Fibronectin type-III domain occupies 361–447; it reads EVSAYVDLRV…QPPSQGQCVV (87 aa). A helical transmembrane segment spans residues 463–483; the sequence is LLHVTVVLCAVLLALPVGAYV. A glycan (N-linked (GlcNAc...) asparagine) is linked at Asn491. The tract at residues 521–549 is disordered; the sequence is FKDPSGVYEDGESHRVMEEDEEVEKEGIS. The segment covering 538 to 549 has biased composition (acidic residues); the sequence is EEDEEVEKEGIS.

As to quaternary structure, interacts with LRIT1; may form a heterodimer with LRIT1.

It localises to the membrane. The chain is Leucine-rich repeat, immunoglobulin-like domain and transmembrane domain-containing protein 2 (Lrit2) from Mus musculus (Mouse).